The chain runs to 257 residues: UPF0246 protein BPP3440 (257 aa).

It belongs to the UPF0246 family.

This Bordetella parapertussis (strain 12822 / ATCC BAA-587 / NCTC 13253) protein is UPF0246 protein BPP3440.